The following is a 621-amino-acid chain: MALALVSVAPLVSMRRSLFSSPYELKSIDKTIPNLVMCRKRMLGRPSIRVSSTASVSNDDGVRRRVGDYRYNHWDEDLIDSLATSYEAPSYLKRADTLVEAIKDRFNSMGVDDGERMSPLTDLYQRLWMVDSVERLGIDRHFQNEIKSALDYVFSYWKEKGIGRGRQSAVTDLNSTALGLRTLRLHGYPVSSDVLENFKDHNGQFTCSGIQTEGEIRGVLNLFRASLIAFPGEKVMEEAEIFSTMYLKHALQKIAVSSLSQEIEYLLEYGWHTNPPRLEARMYMEVFPQDTIYEQKLVELAKVEFNIFHSLQKRELQSLTRWWKHYGFPQLSFTRHIHVEYYTFGSCIATDPKQSAFRLCFAKMSYFVTVLDDIYDTYGTMEELELFTAAIKRWDPSVVDCLPEYMKGVYMAVYDTVNEMAKEAEKVQGRDTLNYVRQAWELYIDAYMPEAKWISSGYLPTFQEYLDNSKISFGTRITILQPILTLGEPLPHEILQEIDFPAKFNDLISVILRLKGDTRCYKADRARGEEASSVSCYMKDNAGITEEDAIHCINDMVNNLLKELNWELLKPDSNVPISCRKAAFDICRIFHHGYKYRDGYGDATIEVKNLVKRTVLEPVPL.

A chloroplast-targeting transit peptide spans 1-49 (MALALVSVAPLVSMRRSLFSSPYELKSIDKTIPNLVMCRKRMLGRPSIR). The Mg(2+) site is built by Asp372, Asp376, and Asp524. Positions 372–376 (DDIYD) match the DDXXD motif motif.

It belongs to the terpene synthase family. Tpsd subfamily. Mg(2+) is required as a cofactor. It depends on Mn(2+) as a cofactor.

It localises to the plastid. The protein resides in the chloroplast. It carries out the reaction (2E)-geranyl diphosphate = (-)-beta-phellandrene + diphosphate. The protein operates within terpene metabolism; oleoresin biosynthesis. Its pathway is secondary metabolite biosynthesis; terpenoid biosynthesis. In terms of biological role, monoterpene synthase (TPS) involved in the biosynthesis of monoterpene natural products included in conifer oleoresin secretions and volatile emissions; these compounds contribute to biotic and abiotic stress defense against herbivores and pathogens. Catalyzes the conversion of (2E)-geranyl diphosphate (GPP) to (-)-beta-phellandrene. This is (-)-beta-phellandrene synthase 1, chloroplastic from Pinus banksiana (Jack pine).